Here is a 161-residue protein sequence, read N- to C-terminus: Nucleotide-binding protein Tcr_1902 (161 aa).

The protein belongs to the YajQ family.

In terms of biological role, nucleotide-binding protein. This chain is Nucleotide-binding protein Tcr_1902, found in Hydrogenovibrio crunogenus (strain DSM 25203 / XCL-2) (Thiomicrospira crunogena).